The chain runs to 120 residues: Large ribosomal subunit protein uL22 (120 aa).

The protein belongs to the universal ribosomal protein uL22 family. Part of the 50S ribosomal subunit.

Its function is as follows. This protein binds specifically to 23S rRNA; its binding is stimulated by other ribosomal proteins, e.g. L4, L17, and L20. It is important during the early stages of 50S assembly. It makes multiple contacts with different domains of the 23S rRNA in the assembled 50S subunit and ribosome. In terms of biological role, the globular domain of the protein is located near the polypeptide exit tunnel on the outside of the subunit, while an extended beta-hairpin is found that lines the wall of the exit tunnel in the center of the 70S ribosome. In Corynebacterium aurimucosum (strain ATCC 700975 / DSM 44827 / CIP 107346 / CN-1) (Corynebacterium nigricans), this protein is Large ribosomal subunit protein uL22.